The sequence spans 89 residues: Nucleoside triphosphatase I (89 aa).

A Helicase ATP-binding domain is found at phenylalanine 42 to leucine 89. Histidine 55–threonine 62 is an ATP binding site.

It belongs to the helicase family. NPH I subfamily.

The catalysed reaction is a ribonucleoside 5'-triphosphate + H2O = a ribonucleoside 5'-diphosphate + phosphate + H(+). In terms of biological role, serves two roles in transcription; it acts in concert with viral termination factor/capping enzyme to catalyze release of UUUUUNU-containing nascent RNA from the elongation complex, and it acts by itself as a polymerase elongation factor to facilitate readthrough of intrinsic pause sites. This is Nucleoside triphosphatase I (NPH1) from Swinepox virus (strain Kasza) (SWPV).